The primary structure comprises 234 residues: Ribosomal RNA large subunit methyltransferase E (234 aa).

Residues 1–37 (MSDDDRRRWKGPGPERQDSGRRSTERKVIARNARTES) form a disordered region. Residues Gly-91, Trp-93, Asp-109, Asp-125, and Asp-149 each coordinate S-adenosyl-L-methionine. Catalysis depends on Lys-189, which acts as the Proton acceptor.

It belongs to the class I-like SAM-binding methyltransferase superfamily. RNA methyltransferase RlmE family.

It localises to the cytoplasm. It carries out the reaction uridine(2552) in 23S rRNA + S-adenosyl-L-methionine = 2'-O-methyluridine(2552) in 23S rRNA + S-adenosyl-L-homocysteine + H(+). In terms of biological role, specifically methylates the uridine in position 2552 of 23S rRNA at the 2'-O position of the ribose in the fully assembled 50S ribosomal subunit. The chain is Ribosomal RNA large subunit methyltransferase E from Hyphomonas neptunium (strain ATCC 15444).